Consider the following 273-residue polypeptide: Elongation factor Ts (273 aa).

Residues 80 to 83 (TDFV) are involved in Mg(2+) ion dislocation from EF-Tu.

The protein belongs to the EF-Ts family.

It localises to the cytoplasm. In terms of biological role, associates with the EF-Tu.GDP complex and induces the exchange of GDP to GTP. It remains bound to the aminoacyl-tRNA.EF-Tu.GTP complex up to the GTP hydrolysis stage on the ribosome. This chain is Elongation factor Ts, found in Tropheryma whipplei (strain Twist) (Whipple's bacillus).